The primary structure comprises 294 residues: Zinc finger protein CONSTANS-LIKE 3 (294 aa).

Residues cysteine 8, cysteine 11, cysteine 31, histidine 36, cysteine 51, cysteine 54, cysteine 74, and histidine 79 each coordinate Zn(2+). The B box-type 1; atypical zinc finger occupies 8 to 50 (CDSCKSTAATLFCRADAAFLCGDCDGKIHTANKLASRHERVWL). The segment at 51 to 93 (CEVCEQAPAHVTCKADAAALCVTCDRDIHSANPLSRRHERVPI) adopts a B box-type 2; atypical zinc-finger fold. The CCT domain maps to 229–271 (REARVLRYREKRKNRKFEKTIRYASRKAYAEMRPRIKGRFAKR).

The protein belongs to the CONSTANS family.

Its subcellular location is the nucleus. The protein is Zinc finger protein CONSTANS-LIKE 3 (COL3) of Arabidopsis thaliana (Mouse-ear cress).